Consider the following 485-residue polypeptide: Probable alginate O-acetylase AlgI (485 aa).

9 consecutive transmembrane segments (helical) span residues 7–24, 39–61, 78–100, 115–137, 150–172, 312–334, 360–382, 402–424, and 461–483; these read VFLFLFLPIFLGLYYLSG, FYAWWRVDFLALFAGVTLWNYWI, WLLLGVGVDLAILGYFKYANFGV, FILTHVLLPIGISFYIFESISYI, NLIDFAAFVAIFPHLIAGPVLRF, FLTMLLGGLWHGANFTYIIWGAW, AFTFLLVVVGWVIFRAENLHVAA, AQLTGLQVATLVIAYLTLAFFGL, and ILLLFVASILKLSAQSYSPFLYF. Residue His322 is part of the active site.

It belongs to the membrane-bound acyltransferase family.

The protein resides in the cell inner membrane. Its pathway is glycan biosynthesis; alginate biosynthesis. In terms of biological role, together with AlgJ and AlgF, forms an inner membrane complex which probably interacts with the alginate polymerization-transport complex and adds acetyl groups at the O-2 and O-3 positions of mannuronate residues. Acetylation of alginate is important for the architecture of biofilms and increases the ability of alginate to act as a defense barrier. The chain is Probable alginate O-acetylase AlgI (algI) from Pseudomonas putida (strain ATCC 47054 / DSM 6125 / CFBP 8728 / NCIMB 11950 / KT2440).